Reading from the N-terminus, the 157-residue chain is Snaclec EMS16 subunit alpha (157 aa).

A signal peptide spans Met1–Ala23. 3 disulfide bridges follow: Cys27–Cys38, Cys55–Cys152, and Cys127–Cys144. The 120-residue stretch at Tyr34 to Lys153 folds into the C-type lectin domain.

Belongs to the snaclec family. As to quaternary structure, heterodimer of subunits A and B; disulfide-linked. Expressed by the venom gland.

It localises to the secreted. Its function is as follows. EMS16 is a potent and selective inhibitor of alpha-2/beta-1 (ITGA2/ITGB1) integrin and acts as a potent antagonist of platelet aggregation and cell migration. Binds specifically to the I domain of the alpha-2 subunit, in a metal ion-independent fashion. In Echis multisquamatus (Central Asian sand viper), this protein is Snaclec EMS16 subunit alpha.